A 130-amino-acid chain; its full sequence is Small ribosomal subunit protein bS18 (130 aa).

Basic and acidic residues-rich tracts occupy residues 98–108 (KKMEESVKSAE) and 117–130 (EESKPKRTRKAKTE). The disordered stretch occupies residues 98 to 130 (KKMEESVKSAEPKATAEATEESKPKRTRKAKTE).

It belongs to the bacterial ribosomal protein bS18 family. In terms of assembly, part of the 30S ribosomal subunit. Forms a tight heterodimer with protein bS6.

Binds as a heterodimer with protein bS6 to the central domain of the 16S rRNA, where it helps stabilize the platform of the 30S subunit. This chain is Small ribosomal subunit protein bS18, found in Metamycoplasma arthritidis (strain 158L3-1) (Mycoplasma arthritidis).